The primary structure comprises 235 residues: Pyridoxine 5'-phosphate synthase (235 aa).

Residue asparagine 6 participates in 3-amino-2-oxopropyl phosphate binding. 8-9 (DH) lines the 1-deoxy-D-xylulose 5-phosphate pocket. Arginine 17 contacts 3-amino-2-oxopropyl phosphate. Histidine 42 serves as the catalytic Proton acceptor. Positions 44 and 49 each coordinate 1-deoxy-D-xylulose 5-phosphate. Glutamate 69 (proton acceptor) is an active-site residue. 1-deoxy-D-xylulose 5-phosphate is bound at residue threonine 99. Residue histidine 188 is the Proton donor of the active site. Residues glycine 189 and 210–211 (GH) each bind 3-amino-2-oxopropyl phosphate.

The protein belongs to the PNP synthase family. In terms of assembly, homooctamer; tetramer of dimers.

It localises to the cytoplasm. It catalyses the reaction 3-amino-2-oxopropyl phosphate + 1-deoxy-D-xylulose 5-phosphate = pyridoxine 5'-phosphate + phosphate + 2 H2O + H(+). Its pathway is cofactor biosynthesis; pyridoxine 5'-phosphate biosynthesis; pyridoxine 5'-phosphate from D-erythrose 4-phosphate: step 5/5. Functionally, catalyzes the complicated ring closure reaction between the two acyclic compounds 1-deoxy-D-xylulose-5-phosphate (DXP) and 3-amino-2-oxopropyl phosphate (1-amino-acetone-3-phosphate or AAP) to form pyridoxine 5'-phosphate (PNP) and inorganic phosphate. The sequence is that of Pyridoxine 5'-phosphate synthase from Wolbachia pipientis subsp. Culex pipiens (strain wPip).